A 1023-amino-acid polypeptide reads, in one-letter code: NLR family CARD domain-containing protein 4 (1023 aa).

Residues 1–88 form the CARD domain; that stretch reads MNFIKENSQA…PVYQDLTGHS (88 aa). Residues 95–298 are nucleotide-binding domain (NBD); the sequence is EEDLDVLAQS…HVGALTVEVG (204 aa). An NACHT domain is found at 163-476; the sequence is SPCLIEGESG…VSKGNSYLKK (314 aa). 169 to 176 lines the ATP pocket; it reads GESGKGKS. The segment at 356-463 is winged-helix domain (WHD); that stretch reads AHTQTMLFQT…RLSSLLKSRE (108 aa). At S533 the chain carries Phosphoserine. LRR repeat units lie at residues 578–598, 655–678, 734–757, 761–784, 786–811, 823–846, 847–869, 877–901, 910–932, 935–962, 964–984, and 998–1020; these read FFQGKSLYINSENIPDYLFDF, MQKFKTLEVTLRDISKLNKQDIKY, VTDLQNLSIHDLHTQRLPGGLADS, LKNLLKLILDDIRLNEEDAKSLAE, LRNLKKMRLLHLTRLSDMGEGMDYIV, EMKLVDCCLTANSLKILAQNLHNL, VKLSVLDMSENYLEKAGSEALQG, LEQLSALMLPWCWDAYISLPNLLKQ, KLGLKNWRLRDEEIRSFGEFLEM, LRDLQQLDLAGHGVSSDGWLSFMDVFEN, KQLVFFDFGTEEFLPDAALVR, and EARLTGWELDDYDISVIKGTFKL.

In terms of assembly, homooligomer; homooligomerizes following activation of Naip proteins by pathogenic proteins such as S.typhimurium (Salmonella) flagellin or PrgJ. Component of the NLRC4 inflammasome, at least composed of NLRC4, caspase-1 (CASP1) and some NAIP family member. Interacts with EIF2AK2/PKR. Phosphorylated at Ser-533 following infection of macrophages with S.typhimurium (Salmonella). Phosphorylation is essential for NLRC4 inflammasome function to promote caspase-1 activation and pyroptosis. PRKCD phosphorylates Ser-533 in vitro.

The protein resides in the cytoplasm. Its subcellular location is the cytosol. In terms of biological role, key component of inflammasomes that indirectly senses specific proteins from pathogenic bacteria and fungi and responds by assembling an inflammasome complex that promotes caspase-1 activation, cytokine production and macrophage pyroptosis. The NLRC4 inflammasome is activated as part of the innate immune response to a range of intracellular bacteria. The protein is NLR family CARD domain-containing protein 4 (Nlrc4) of Rattus norvegicus (Rat).